The primary structure comprises 352 residues: tRNA pseudouridine synthase D (352 aa).

D81 serves as the catalytic Nucleophile. A TRUD domain is found at 157-303 (GIPNYFGAQR…MEHERRILRL (147 aa)).

It belongs to the pseudouridine synthase TruD family.

The catalysed reaction is uridine(13) in tRNA = pseudouridine(13) in tRNA. Its function is as follows. Responsible for synthesis of pseudouridine from uracil-13 in transfer RNAs. The protein is tRNA pseudouridine synthase D of Pseudomonas syringae pv. syringae (strain B728a).